The chain runs to 228 residues: Small ribosomal subunit protein uS3 (228 aa).

The KH type-2 domain maps to 39-107 (VREYLQDKLK…PVHINIEEIR (69 aa)).

It belongs to the universal ribosomal protein uS3 family. As to quaternary structure, part of the 30S ribosomal subunit. Forms a tight complex with proteins S10 and S14.

In terms of biological role, binds the lower part of the 30S subunit head. Binds mRNA in the 70S ribosome, positioning it for translation. In Stutzerimonas stutzeri (strain A1501) (Pseudomonas stutzeri), this protein is Small ribosomal subunit protein uS3.